Reading from the N-terminus, the 551-residue chain is Chaperonin GroEL (551 aa).

ATP contacts are provided by residues 30 to 33 (TLGP), Lys-51, 87 to 91 (DGTTT), Gly-415, 479 to 481 (NAA), and Asp-495. The segment at 523–551 (DSPKEDKSSDMPSPSAGGMGGMGGMGGMM) is disordered. Over residues 539-551 (GGMGGMGGMGGMM) the composition is skewed to gly residues.

The protein belongs to the chaperonin (HSP60) family. As to quaternary structure, forms a cylinder of 14 subunits composed of two heptameric rings stacked back-to-back. Interacts with the co-chaperonin GroES.

The protein localises to the cytoplasm. It carries out the reaction ATP + H2O + a folded polypeptide = ADP + phosphate + an unfolded polypeptide.. Together with its co-chaperonin GroES, plays an essential role in assisting protein folding. The GroEL-GroES system forms a nano-cage that allows encapsulation of the non-native substrate proteins and provides a physical environment optimized to promote and accelerate protein folding. This is Chaperonin GroEL from Buchnera aphidicola subsp. Chaetophorus leucomelas.